A 364-amino-acid chain; its full sequence is Palmitoyltransferase ZDHHC9 (364 aa).

At 1-35 the chain is on the cytoplasmic side; it reads MSVMVVRKKVTRKWEKLPGRNTFCCDGRVMMARQK. Residues 36–56 form a helical membrane-spanning segment; it reads GIFYLTLFLILGTCTLFFAFE. At 57–63 the chain is on the lumenal side; sequence CRYLAVQ. Residues 64–84 traverse the membrane as a helical segment; the sequence is LSPAIPVFAAMLFLFSMATLL. Residues 85 to 183 lie on the Cytoplasmic side of the membrane; the sequence is RTSFSDPGVI…NCVGKRNYRY (99 aa). A DHHC domain is found at 139–189; the sequence is KYCYTCKIFRPPRASHCSICDNCVERFDHHCPWVGNCVGKRNYRYFYLFIL. Catalysis depends on cysteine 169, which acts as the S-palmitoyl cysteine intermediate. Residues 184–204 traverse the membrane as a helical segment; the sequence is FYLFILSLSLLTIYVFAFNIV. Residues 205–228 are Lumenal-facing; that stretch reads YVALKSLKIGFLETLKETPGTVLE. The helical transmembrane segment at 229–249 threads the bilayer; the sequence is VLICFFTLWSVVGLTGFHTFL. The Cytoplasmic portion of the chain corresponds to 250 to 364; that stretch reads VALNQTTNED…PPQEASEAEK (115 aa). Positions 303-364 are disordered; that stretch reads PLEESGSRPP…PPQEASEAEK (62 aa). The span at 310–336 shows a compositional bias: polar residues; the sequence is RPPSTQETSSSLLPQSPASTEHMNSNE. Positions 346–356 are enriched in pro residues; sequence EMPPPEPPEPP.

Belongs to the DHHC palmitoyltransferase family. ERF2/ZDHHC9 subfamily. In terms of assembly, interacts with GOLGA7.

Its subcellular location is the endoplasmic reticulum membrane. It is found in the golgi apparatus membrane. It catalyses the reaction L-cysteinyl-[protein] + hexadecanoyl-CoA = S-hexadecanoyl-L-cysteinyl-[protein] + CoA. Functionally, palmitoyltransferase that catalyzes the addition of palmitate onto various protein substrates, such as ADRB2, GSDMD, HRAS, NRAS and CGAS. The ZDHHC9-GOLGA7 complex is a palmitoyltransferase specific for HRAS and NRAS. May have a palmitoyltransferase activity toward the beta-2 adrenergic receptor/ADRB2 and therefore regulate G protein-coupled receptor signaling. Acts as a regulator of innate immunity by catalyzing palmitoylation of CGAS, thereby promoting CGAS homodimerization and cyclic GMP-AMP synthase activity. Activates pyroptosis by catalyzing palmitoylation of gasdermin-D (GSDMD), thereby promoting membrane translocation and pore formation of GSDMD. The polypeptide is Palmitoyltransferase ZDHHC9 (Zdhhc9) (Mus musculus (Mouse)).